A 105-amino-acid chain; its full sequence is Large ribosomal subunit protein uL24 (105 aa).

Belongs to the universal ribosomal protein uL24 family. As to quaternary structure, part of the 50S ribosomal subunit.

Functionally, one of two assembly initiator proteins, it binds directly to the 5'-end of the 23S rRNA, where it nucleates assembly of the 50S subunit. In terms of biological role, one of the proteins that surrounds the polypeptide exit tunnel on the outside of the subunit. The polypeptide is Large ribosomal subunit protein uL24 (Clostridium novyi (strain NT)).